The sequence spans 612 residues: Glutamine--fructose-6-phosphate aminotransferase [isomerizing] (612 aa).

Cysteine 2 serves as the catalytic Nucleophile; for GATase activity. Residues 2–221 (CGIVGIVSQR…NGDIAEITNS (220 aa)) enclose the Glutamine amidotransferase type-2 domain. SIS domains are found at residues 289-429 (FNKT…IRKI) and 461-602 (LVKN…VDHP). Catalysis depends on lysine 607, which acts as the For Fru-6P isomerization activity.

Homodimer.

It localises to the cytoplasm. The catalysed reaction is D-fructose 6-phosphate + L-glutamine = D-glucosamine 6-phosphate + L-glutamate. Functionally, catalyzes the first step in hexosamine metabolism, converting fructose-6P into glucosamine-6P using glutamine as a nitrogen source. This Wigglesworthia glossinidia brevipalpis protein is Glutamine--fructose-6-phosphate aminotransferase [isomerizing].